Here is a 395-residue protein sequence, read N- to C-terminus: Scyllo-inosose 3-dehydrogenase (395 aa).

Position 66 (cysteine 66) interacts with Zn(2+). Residues serine 68 and histidine 71 each act as charge relay system in the active site. Residues histidine 95, glutamate 96, cysteine 131, cysteine 134, cysteine 137, cysteine 145, and glutamate 193 each coordinate Zn(2+). The NAD(+) site is built by isoleucine 223, glutamate 243, and arginine 248.

Belongs to the zinc-containing alcohol dehydrogenase family. Homodimer. The cofactor is Zn(2+).

It carries out the reaction scyllo-inosose + NAD(+) = 3-dehydro-scyllo-inosose + NADH + H(+). It functions in the pathway polyol metabolism; myo-inositol metabolism. Catalyzes the NAD(+)-dependent oxidation of scyllo-inosose (2-keto-myo-inositol) to 3-dehydro-scyllo-inosose (diketo-inositol), and thus probably functions in a myo-inositol degradation pathway together with IolG, IolN and IolO. Has no activity on myo-inositol, D-chiro-inositol and 1-keto-D-chiro-inositol. The chain is Scyllo-inosose 3-dehydrogenase from Thermotoga maritima (strain ATCC 43589 / DSM 3109 / JCM 10099 / NBRC 100826 / MSB8).